Reading from the N-terminus, the 144-residue chain is uncharacterized protein (144 aa).

4 consecutive transmembrane segments (helical) span residues 7–29, 51–73, 85–107, and 122–139; these read FPAS…RDLV, VAIG…FLLV, AVLA…VGAF, and HLHH…LIFV.

It is found in the cell membrane. This is an uncharacterized protein from Treponema pallidum (strain Nichols).